Here is a 353-residue protein sequence, read N- to C-terminus: UPF0283 membrane protein CKO_01392 (353 aa).

3 helical membrane-spanning segments follow: residues 70 to 90 (MVMG…VQWT), 99 to 119 (WVAL…VGSV), and 213 to 233 (ESTL…FIAW).

Belongs to the UPF0283 family.

The protein resides in the cell inner membrane. The sequence is that of UPF0283 membrane protein CKO_01392 from Citrobacter koseri (strain ATCC BAA-895 / CDC 4225-83 / SGSC4696).